We begin with the raw amino-acid sequence, 404 residues long: 8-amino-7-oxononanoate synthase (404 aa).

Arginine 20 contacts substrate. 116-117 (GY) contacts pyridoxal 5'-phosphate. Histidine 141 lines the substrate pocket. Pyridoxal 5'-phosphate is bound by residues serine 187, histidine 215, and threonine 243. An N6-(pyridoxal phosphate)lysine modification is found at lysine 246. Threonine 366 contacts substrate.

The protein belongs to the class-II pyridoxal-phosphate-dependent aminotransferase family. BioF subfamily. In terms of assembly, homodimer. The cofactor is pyridoxal 5'-phosphate.

It carries out the reaction 6-carboxyhexanoyl-[ACP] + L-alanine + H(+) = (8S)-8-amino-7-oxononanoate + holo-[ACP] + CO2. Its pathway is cofactor biosynthesis; biotin biosynthesis. Catalyzes the decarboxylative condensation of pimeloyl-[acyl-carrier protein] and L-alanine to produce 8-amino-7-oxononanoate (AON), [acyl-carrier protein], and carbon dioxide. The sequence is that of 8-amino-7-oxononanoate synthase from Cupriavidus taiwanensis (strain DSM 17343 / BCRC 17206 / CCUG 44338 / CIP 107171 / LMG 19424 / R1) (Ralstonia taiwanensis (strain LMG 19424)).